The sequence spans 154 residues: Resuscitation-promoting factor RpfD (154 aa).

Residues 21–41 (IVCTVFIETAVVATMFVALLG) traverse the membrane as a helical segment.

Belongs to the transglycosylase family. Rpf subfamily.

The protein localises to the cell membrane. In terms of biological role, factor that stimulates resuscitation of dormant cells. Has peptidoglycan (PG) hydrolytic activity. PG fragments could either directly activate the resuscitation pathway of dormant bacteria or serve as a substrate for endogenous Rpf, resulting in low molecular weight products with resuscitation activity. In Mycobacterium tuberculosis (strain CDC 1551 / Oshkosh), this protein is Resuscitation-promoting factor RpfD (rpfD).